Reading from the N-terminus, the 804-residue chain is Leucine--tRNA ligase (804 aa).

Positions P40–H51 match the 'HIGH' region motif. Positions K576–S580 match the 'KMSKS' region motif. K579 provides a ligand contact to ATP.

It belongs to the class-I aminoacyl-tRNA synthetase family.

It localises to the cytoplasm. It catalyses the reaction tRNA(Leu) + L-leucine + ATP = L-leucyl-tRNA(Leu) + AMP + diphosphate. The chain is Leucine--tRNA ligase from Enterococcus faecalis (strain ATCC 700802 / V583).